The chain runs to 88 residues: Small ribosomal subunit protein bS20 (88 aa).

The interval methionine 1–methionine 27 is disordered.

The protein belongs to the bacterial ribosomal protein bS20 family.

Functionally, binds directly to 16S ribosomal RNA. The sequence is that of Small ribosomal subunit protein bS20 from Shewanella sediminis (strain HAW-EB3).